We begin with the raw amino-acid sequence, 1719 residues long: Cilia- and flagella-associated protein 43 (1719 aa).

Residues 94–120 (VREEGAGGGADKPSGSGAVSGKQQSSG) are disordered. 6 WD repeats span residues 122-165 (SVVL…GRCR), 174-214 (SSTS…EKAV), 226-263 (PAGAEVTCHAWGPGGLYVGTSTGGLVLLDTATMAPLQL), 308-345 (TSGAAVTALTLNRDLVAVAGADGSVRVFVSVPAAAAAI), 413-452 (CHVGRLAGVVPHPGGGAFLTTGSDGSVRVWSTTDGALLGR), and 513-552 (LHSAPVDVLVFSPANDLLLSAGRDGIAWLCSVDARGGRVR). Positions 569–596 (TWPRSDGGSGAASGHAQAGPVSTTSAEG) are disordered. WD repeat units follow at residues 697-736 (AHARASGGVAVAPGGHLLASGAADGTVALRNMSLITLAAQ) and 749-788 (ITAGGVVTVSFDATGRYLASAGADGALFVYELSKRAAVAN). Residues 1022-1045 (RAKQEAARKADEDAAKRSAKDNAG) are disordered. Residues 1073 to 1114 (PKPAWLVALGVEPDAVNPKLITEEQNRELKEWQAKEKSLQEE) form a WD 9 repeat. Disordered regions lie at residues 1220–1269 (MPGG…AAAA), 1277–1296 (ATAAGGAGSSGGAAPCGAAG), and 1325–1372 (TLNP…AAAA). Residues 1221–1233 (PGGGAIGAAGGHQ) show a composition bias toward gly residues. A compositionally biased stretch (low complexity) spans 1257 to 1269 (ASLAHSPSGAAAA). The segment covering 1344 to 1358 (SSALHPSHSHASVHG) has biased composition (low complexity). 2 coiled-coil regions span residues 1524–1609 (AAQW…RSAQ) and 1651–1679 (HKKLKEIALAQQNELGELRQQLEKLRLRT). Residues 1685-1719 (ESGAVAGMPSPPRRLPPDIKLLAGSPSSSSVAGRT) are disordered. Residues 1709–1719 (SPSSSSVAGRT) are compositionally biased toward polar residues.

It belongs to the CFAP43 family.

The protein localises to the cell projection. The protein resides in the cilium. It localises to the flagellum. It is found in the cytoplasm. Its subcellular location is the cytoskeleton. The protein localises to the flagellum axoneme. Flagellar protein involved in flagellum axoneme organization and function. In Chlamydomonas reinhardtii (Chlamydomonas smithii), this protein is Cilia- and flagella-associated protein 43.